The primary structure comprises 249 residues: Uridylate kinase (249 aa).

Residue 19-22 (KLSG) participates in ATP binding. Residue glycine 61 participates in UMP binding. Residues glycine 62 and arginine 66 each coordinate ATP. UMP contacts are provided by residues aspartate 81 and 142–149 (TGNPYFTT). Residues threonine 169, tyrosine 175, and aspartate 178 each contribute to the ATP site.

This sequence belongs to the UMP kinase family. Homohexamer.

The protein resides in the cytoplasm. It carries out the reaction UMP + ATP = UDP + ADP. It participates in pyrimidine metabolism; CTP biosynthesis via de novo pathway; UDP from UMP (UMPK route): step 1/1. Its activity is regulated as follows. Inhibited by UTP. Its function is as follows. Catalyzes the reversible phosphorylation of UMP to UDP. The chain is Uridylate kinase from Anaeromyxobacter sp. (strain Fw109-5).